Here is a 224-residue protein sequence, read N- to C-terminus: UPF0758 protein lwe1562 (224 aa).

The MPN domain occupies 102–224 (VIRCPDDAVK…YISLKEKGYF (123 aa)). Zn(2+) contacts are provided by His173, His175, and Asp186. The JAMM motif signature appears at 173–186 (HNHPSGDPTPSSED).

The protein belongs to the UPF0758 family.

This chain is UPF0758 protein lwe1562, found in Listeria welshimeri serovar 6b (strain ATCC 35897 / DSM 20650 / CCUG 15529 / CIP 8149 / NCTC 11857 / SLCC 5334 / V8).